Consider the following 346-residue polypeptide: Syntaxin UFE1 (346 aa).

The Cytoplasmic segment spans residues 1 to 324; the sequence is MMSDLTPIFR…RKAKRAAGRT (324 aa). The region spanning 255-317 is the t-SNARE coiled-coil homology domain; that stretch reads LNQKNEQLKK…KKGNKELRKA (63 aa). Residues 325–342 traverse the membrane as a helical; Anchor for type IV membrane protein segment; sequence AKMTTYGAIIMGVFILFL. Residues 343 to 346 are Lumenal-facing; it reads DYVG.

It belongs to the syntaxin family. Component of a SNARE complex consisting of UFE1, USE1, SEC20 and SEC22 or YKT6.

Its subcellular location is the endoplasmic reticulum membrane. In terms of biological role, syntaxin required for targeting and fusion of Golgi-derived retrograde transport vesicles with the ER. In Saccharomyces cerevisiae (strain ATCC 204508 / S288c) (Baker's yeast), this protein is Syntaxin UFE1 (UFE1).